Consider the following 261-residue polypeptide: MATVSIPANTTALLLDIEGTTTPITFVKDILFPYIKDHLEEHLSAHWEEDECKQDVHLLKKQVEEDLRLNRACAQHALDQSGHTDEEKAIREVVDNVLWQMASDRKTTALKQLQGHMWRAAYAAGRIKGEVYQDVVPSIRRWRRQGLKVYIYSSGSVEAQKLLFGYSVEGDVLDLFDGHFDTNIGAKVESKSYERIAERMGCLSEEIMFLTDITREAKAAEDAGVNVAVVVRPGNMELTEEERSHYNLITTFSQLEVMGRV.

Mg(2+) is bound by residues Asp16 and Glu18. Substrate-binding positions include 153–154 and Lys187; that span reads SS. Residue Asp212 coordinates Mg(2+).

The protein belongs to the HAD-like hydrolase superfamily. MasA/MtnC family. In terms of assembly, monomer. Mg(2+) is required as a cofactor.

The protein resides in the cytoplasm. Its subcellular location is the nucleus. The catalysed reaction is 5-methylsulfanyl-2,3-dioxopentyl phosphate + H2O = 1,2-dihydroxy-5-(methylsulfanyl)pent-1-en-3-one + phosphate. Its pathway is amino-acid biosynthesis; L-methionine biosynthesis via salvage pathway; L-methionine from S-methyl-5-thio-alpha-D-ribose 1-phosphate: step 3/6. It functions in the pathway amino-acid biosynthesis; L-methionine biosynthesis via salvage pathway; L-methionine from S-methyl-5-thio-alpha-D-ribose 1-phosphate: step 4/6. Functionally, bifunctional enzyme that catalyzes the enolization of 2,3-diketo-5-methylthiopentyl-1-phosphate (DK-MTP-1-P) into the intermediate 2-hydroxy-3-keto-5-methylthiopentenyl-1-phosphate (HK-MTPenyl-1-P), which is then dephosphorylated to form the acireductone 1,2-dihydroxy-3-keto-5-methylthiopentene (DHK-MTPene). The protein is Enolase-phosphatase E1 (enoph1) of Salmo salar (Atlantic salmon).